The chain runs to 453 residues: Odorant receptor 83a (453 aa).

At 1–28 (MKSTFKEERIKDDSKRRDLFVFVRQTMC) the chain is on the cytoplasmic side. A helical transmembrane segment spans residues 29–49 (IAAMYPFGYYVNGSGVLAVLV). The Extracellular portion of the chain corresponds to 50–85 (RFCDLTYELFNYFVSVHIAGLYICTIYINYGQGDLD). The chain crosses the membrane as a helical span at residues 86-106 (FFVNCLIQTIIYLWTIAMKLY). Residues 107–148 (FRRFRPGLLNTILSNINDEYETRSAVGFSFVTMAGSYRMSKL) are Cytoplasmic-facing. The chain crosses the membrane as a helical span at residues 149 to 169 (WIKTYVYCCYIGTIFWLALPI). Over 170–203 (AYRDRSLPLACWYPFDYTQPGVYEVVFLLQAMGQ) the chain is Extracellular. Residues 204–224 (IQVAASFASSSGLHMVLCVLI) form a helical membrane-spanning segment. The Cytoplasmic portion of the chain corresponds to 225–322 (SGQYDVLFCS…ALKKIESFYS (98 aa)). A helical transmembrane segment spans residues 323-343 (PIWFVKIGEVTFLMCLVAFVS). The Extracellular portion of the chain corresponds to 344–359 (TKSTAANSFMRMVSLG). Residues 360–380 (QYLLLVLYELFIICYFADIVF) form a helical membrane-spanning segment. Over 381-408 (QNSQRCGEALWRSPWQRHLKDVRSDYMF) the chain is Cytoplasmic. Residues 409 to 429 (FMLNSRRQFQLTAGKISNLNV) traverse the membrane as a helical segment. Residues 430-453 (DRFRGTITTAFSFLTLLQKMDARE) lie on the Extracellular side of the membrane.

Belongs to the insect chemoreceptor superfamily. Heteromeric odorant receptor channel (TC 1.A.69) family. Or2a subfamily. Interacts with Orco. Complexes exist early in the endomembrane system in olfactory sensory neurons (OSNs), coupling these complexes to the conserved ciliary trafficking pathway.

The protein localises to the cell membrane. In terms of biological role, odorant receptor which mediates acceptance or avoidance behavior, depending on its substrates. The odorant receptor repertoire encodes a large collection of odor stimuli that vary widely in identity, intensity, and duration. May form a complex with Orco to form odorant-sensing units, providing sensitive and prolonged odorant signaling and calcium permeability. Involved in the behavioral responses to pentanol, ethyl acetate, and propyl acetate. This chain is Odorant receptor 83a (Or83a), found in Drosophila melanogaster (Fruit fly).